An 834-amino-acid chain; its full sequence is Periplasmic nitrate reductase (834 aa).

Positions 1–31 (MSSELTRRNLLKAHAAGIAAATAGIALPAAA) form a signal peptide, tat-type signal. In terms of domain architecture, 4Fe-4S Mo/W bis-MGD-type spans 43 to 99 (IKWSKAPCRFCGTGCGVMVGVKEGKVVATHGDMQAEVNRGLNCIKGYFLSKIMYGKD). The [4Fe-4S] cluster site is built by Cys-50, Cys-53, Cys-57, and Cys-85. Mo-bis(molybdopterin guanine dinucleotide) is bound by residues Lys-87, Gln-154, Asn-179, Cys-183, 216-223 (WGSNMAEM), 247-251 (STFTH), 266-268 (GTD), Met-377, Gln-381, Asn-487, 513-514 (SD), Lys-536, Asp-563, and 723-732 (TGRVLEHWHS). Position 799 (Trp-799) interacts with substrate. 2 residues coordinate Mo-bis(molybdopterin guanine dinucleotide): Asn-807 and Lys-824.

Belongs to the prokaryotic molybdopterin-containing oxidoreductase family. NasA/NapA/NarB subfamily. Component of the periplasmic nitrate reductase NapAB complex composed of NapA and NapB. [4Fe-4S] cluster is required as a cofactor. Mo-bis(molybdopterin guanine dinucleotide) serves as cofactor. Post-translationally, predicted to be exported by the Tat system. The position of the signal peptide cleavage has not been experimentally proven.

The protein resides in the periplasm. The enzyme catalyses 2 Fe(II)-[cytochrome] + nitrate + 2 H(+) = 2 Fe(III)-[cytochrome] + nitrite + H2O. Functionally, catalytic subunit of the periplasmic nitrate reductase complex NapAB. Receives electrons from NapB and catalyzes the reduction of nitrate to nitrite. In Agrobacterium fabrum (strain C58 / ATCC 33970) (Agrobacterium tumefaciens (strain C58)), this protein is Periplasmic nitrate reductase.